The primary structure comprises 219 residues: N-(5'-phosphoribosyl)anthranilate isomerase (219 aa).

This sequence belongs to the TrpF family.

It carries out the reaction N-(5-phospho-beta-D-ribosyl)anthranilate = 1-(2-carboxyphenylamino)-1-deoxy-D-ribulose 5-phosphate. Its pathway is amino-acid biosynthesis; L-tryptophan biosynthesis; L-tryptophan from chorismate: step 3/5. This chain is N-(5'-phosphoribosyl)anthranilate isomerase, found in Bradyrhizobium sp. (strain BTAi1 / ATCC BAA-1182).